Reading from the N-terminus, the 369-residue chain is Carbamoyl phosphate synthase small chain (369 aa).

Residues 1 to 168 (MYGILVLEDG…KKVVKYPAKD (168 aa)) form a CPSase region. L-glutamine contacts are provided by Ser-45, Gly-220, and Gly-222. In terms of domain architecture, Glutamine amidotransferase type-1 spans 172–364 (SCVVIDCGVK…VALGMKFKQE (193 aa)). Cys-247 functions as the Nucleophile in the catalytic mechanism. 5 residues coordinate L-glutamine: Leu-248, Gln-251, Asn-289, Gly-291, and Phe-292. Catalysis depends on residues His-337 and Glu-339.

The protein belongs to the CarA family. In terms of assembly, composed of two chains; the small (or glutamine) chain promotes the hydrolysis of glutamine to ammonia, which is used by the large (or ammonia) chain to synthesize carbamoyl phosphate. Tetramer of heterodimers (alpha,beta)4.

The enzyme catalyses hydrogencarbonate + L-glutamine + 2 ATP + H2O = carbamoyl phosphate + L-glutamate + 2 ADP + phosphate + 2 H(+). It catalyses the reaction L-glutamine + H2O = L-glutamate + NH4(+). It participates in amino-acid biosynthesis; L-arginine biosynthesis; carbamoyl phosphate from bicarbonate: step 1/1. Its pathway is pyrimidine metabolism; UMP biosynthesis via de novo pathway; (S)-dihydroorotate from bicarbonate: step 1/3. In terms of biological role, small subunit of the glutamine-dependent carbamoyl phosphate synthetase (CPSase). CPSase catalyzes the formation of carbamoyl phosphate from the ammonia moiety of glutamine, carbonate, and phosphate donated by ATP, constituting the first step of 2 biosynthetic pathways, one leading to arginine and/or urea and the other to pyrimidine nucleotides. The small subunit (glutamine amidotransferase) binds and cleaves glutamine to supply the large subunit with the substrate ammonia. This chain is Carbamoyl phosphate synthase small chain, found in Methanococcus vannielii (strain ATCC 35089 / DSM 1224 / JCM 13029 / OCM 148 / SB).